Here is an 82-residue protein sequence, read N- to C-terminus: U1-theraphotoxin-Ct1b (82 aa).

The N-terminal stretch at 1–23 is a signal peptide; that stretch reads MRTFTLIAILTCALLVIYHAAEA. Residues 24-44 constitute a propeptide that is removed on maturation; sequence EELEAKDVIESKALATLDEER.

The protein belongs to the neurotoxin 12 (Hwtx-2) family. 03 (juruin) subfamily. In terms of processing, contains 3 disulfide bonds. Two different connectivities are observed in similar proteins (C1-C3, C2-C5, C4-C6 or C1-C4, C2-C5, C3-C6). Expressed by the venom gland.

Its subcellular location is the secreted. In terms of biological role, this toxin causes paralysis and death to sheep blowflies. It does not target insect sodium channels. The chain is U1-theraphotoxin-Ct1b from Coremiocnemis tropix (Australian tarantula spider).